The primary structure comprises 513 residues: MSTPTAADRAKALERKNEGNVFVKEKHFLKAIEKYTEAIDLDSTQSIYFSNRAFAHFKVDNFQSALNDCDEAIKLDPKNIKAYHRRALSCMALLEFKKARKDLNVLLKAKPNDPAATKALLTCDRFIREERFRKAIGGAENEAKISLCQTLNLSSFDANADLANYEGPKLEFEQLYDDKNAFKGAKIKNMSQEFISKMVNDLFLKGKYLPKKYVAAIISHADTLFRQEPSMVELENNSTPDVKISVCGDTHGQFYDVLNLFRKFGKVGPKHTYLFNGDFVDRGSWSCEVALLFYCLKILHPNNFFLNRGNHESDNMNKIYGFEDECKYKYSQRIFNMFAQSFESLPLATLINNDYLVMHGGLPSDPSATLSDFKNIDRFAQPPRDGAFMELLWADPQEANGMGPSQRGLGHAFGPDITDRFLRNNKLRKIFRSHELRMGGVQFEQKGKLMTVFSAPNYCDSQGNLGGVIHVVPGHGILQAGRNDDQNLIIETFEAVEHPDIKPMAYSNGGFGL.

TPR repeat units lie at residues 12-45, 46-79, and 80-113; these read ALERKNEGNVFVKEKHFLKAIEKYTEAIDLDSTQ, SIYFSNRAFAHFKVDNFQSALNDCDEAIKLDPKN, and IKAYHRRALSCMALLEFKKARKDLNVLLKAKPND. Residues 188 to 513 are catalytic; it reads KNMSQEFISK…MAYSNGGFGL (326 aa). Residues Asp-249, His-251, Asp-278, and Asn-310 each coordinate Mn(2+). The Proton donor/acceptor role is filled by His-311. Residues His-359 and His-434 each coordinate Mn(2+).

The protein belongs to the PPP phosphatase family. PP-5 (PP-T) subfamily. In terms of assembly, interacts (via TPR repeats) with HSP82 (via C-terminal MEEVD pentapeptide). It depends on Mg(2+) as a cofactor. Mn(2+) is required as a cofactor.

The protein resides in the nucleus. The enzyme catalyses O-phospho-L-seryl-[protein] + H2O = L-seryl-[protein] + phosphate. It carries out the reaction O-phospho-L-threonyl-[protein] + H2O = L-threonyl-[protein] + phosphate. With respect to regulation, stimulated by arachidonic acid and other unsaturated fatty acids, and by arachidoyl coenzyme A. Functionally, protein phosphatase that specifically binds to and dephosphorylates the molecular chaperone Hsp90 (HSC82 and HSP82). Dephosphorylation positively regulates the Hsp90 chaperone machinery. In Saccharomyces cerevisiae (strain ATCC 204508 / S288c) (Baker's yeast), this protein is Serine/threonine-protein phosphatase T (PPT1).